We begin with the raw amino-acid sequence, 265 residues long: Methyl-coenzyme M reductase II subunit gamma (265 aa).

Residue R123 participates in coenzyme M binding.

The protein belongs to the methyl-coenzyme M reductase gamma subunit family. As to quaternary structure, MCR is a hexamer of two alpha, two beta, and two gamma chains, forming a dimer of heterotrimers. Coenzyme F430 is required as a cofactor.

The enzyme catalyses coenzyme B + methyl-coenzyme M = methane + coenzyme M-coenzyme B heterodisulfide. The protein operates within one-carbon metabolism; methyl-coenzyme M reduction; methane from methyl-coenzyme M: step 1/1. Component of the methyl-coenzyme M reductase (MCR) I that catalyzes the reductive cleavage of methyl-coenzyme M (CoM-S-CH3 or 2-(methylthio)ethanesulfonate) using coenzyme B (CoB or 7-mercaptoheptanoylthreonine phosphate) as reductant which results in the production of methane and the mixed heterodisulfide of CoB and CoM (CoM-S-S-CoB). This is the final step in methanogenesis. The sequence is that of Methyl-coenzyme M reductase II subunit gamma (mrtG) from Methanothermobacter marburgensis (strain ATCC BAA-927 / DSM 2133 / JCM 14651 / NBRC 100331 / OCM 82 / Marburg) (Methanobacterium thermoautotrophicum).